The following is a 488-amino-acid chain: Leucine-rich repeat-containing protein 74A (488 aa).

LRR repeat units follow at residues 134–155 (AVTK…SLVE), 162–182 (YLQE…RIIS), 191–212 (SIWS…LLCQ), 219–239 (QIKK…EHLG), 247–268 (GLTS…ALCN), 275–296 (TLTK…ALGE), 303–324 (CLVY…KISK), and 331–351 (SLRV…ILLI).

This is Leucine-rich repeat-containing protein 74A from Homo sapiens (Human).